The sequence spans 96 residues: NADH-ubiquinone oxidoreductase chain 4L (96 aa).

The next 3 membrane-spanning stretches (helical) occupy residues Ile2 to Val22, Leu28 to Ile48, and Met62 to Ile82.

It belongs to the complex I subunit 4L family.

It is found in the mitochondrion membrane. It catalyses the reaction a ubiquinone + NADH + 5 H(+)(in) = a ubiquinol + NAD(+) + 4 H(+)(out). Functionally, core subunit of the mitochondrial membrane respiratory chain NADH dehydrogenase (Complex I) that is believed to belong to the minimal assembly required for catalysis. Complex I functions in the transfer of electrons from NADH to the respiratory chain. The immediate electron acceptor for the enzyme is believed to be ubiquinone. This is NADH-ubiquinone oxidoreductase chain 4L (mt:ND4L) from Drosophila melanogaster (Fruit fly).